Here is a 196-residue protein sequence, read N- to C-terminus: Glycerol-3-phosphate acyltransferase (196 aa).

Transmembrane regions (helical) follow at residues 1-21 (MIIFTATLIIILAYFLGSISG), 55-75 (IAIFVLLFDSLKGAVPIWLGT), 81-101 (PIYLYIIAISACIGHIYPIYF), 118-138 (AISINFFIIIIITWILTVYLF), and 140-160 (YASLGSIVTFIVITFYVWYIQ).

It belongs to the PlsY family. As to quaternary structure, probably interacts with PlsX.

It is found in the cell inner membrane. The enzyme catalyses an acyl phosphate + sn-glycerol 3-phosphate = a 1-acyl-sn-glycero-3-phosphate + phosphate. It functions in the pathway lipid metabolism; phospholipid metabolism. Its function is as follows. Catalyzes the transfer of an acyl group from acyl-phosphate (acyl-PO(4)) to glycerol-3-phosphate (G3P) to form lysophosphatidic acid (LPA). This enzyme utilizes acyl-phosphate as fatty acyl donor, but not acyl-CoA or acyl-ACP. The sequence is that of Glycerol-3-phosphate acyltransferase from Blochmanniella floridana.